The following is a 63-amino-acid chain: Large ribosomal subunit protein uL30 (63 aa).

Belongs to the universal ribosomal protein uL30 family. Part of the 50S ribosomal subunit.

This is Large ribosomal subunit protein uL30 from Granulibacter bethesdensis (strain ATCC BAA-1260 / CGDNIH1).